The sequence spans 357 residues: Peptide chain release factor 1 (357 aa).

At glutamine 233 the chain carries N5-methylglutamine. Residues 284-305 are disordered; sequence RSASISADRKSQVGTGDRSERI.

It belongs to the prokaryotic/mitochondrial release factor family. In terms of processing, methylated by PrmC. Methylation increases the termination efficiency of RF1.

It localises to the cytoplasm. Functionally, peptide chain release factor 1 directs the termination of translation in response to the peptide chain termination codons UAG and UAA. This is Peptide chain release factor 1 from Clostridium novyi (strain NT).